The sequence spans 242 residues: MTKVLTDQRSIRIKGRSFLAVVLSPESPVDQWLERLDDLAARSAGFFLSRPVVLDVSELSLDKAGLKELLAALRERNVGIMGIEGVRPSMIEPGMPPSLKGGKPASDVEVEPVAVAAELPEDKPHASGEVRAVVQSLVINEPVRSGQSIMFPEGDVTVIGSVASGAEIIAGGSVHIYGALRGRAMAGSLGNVSARIFCRKLEAELLAIDGVYKVAEDIDDKLRGQPVQLWLENDTIKAAKLG.

Belongs to the MinC family. As to quaternary structure, interacts with MinD and FtsZ.

Functionally, cell division inhibitor that blocks the formation of polar Z ring septums. Rapidly oscillates between the poles of the cell to destabilize FtsZ filaments that have formed before they mature into polar Z rings. Prevents FtsZ polymerization. The protein is Probable septum site-determining protein MinC of Agrobacterium fabrum (strain C58 / ATCC 33970) (Agrobacterium tumefaciens (strain C58)).